A 214-amino-acid polypeptide reads, in one-letter code: Adenylate kinase (214 aa).

Residue 10–15 (GAGKGT) participates in ATP binding. Positions 30–59 (STGDMLRAAIKAGTELGKQAKSVIDAGQLV) are NMP. AMP-binding positions include threonine 31, arginine 36, 57–59 (QLV), 85–88 (GFPR), and glutamine 92. Residues 122 to 159 (GRRAHLPSGRTYHNVYNPPKEEGKDDITGEELVVRDDD) form an LID region. ATP contacts are provided by residues arginine 123 and 132–133 (TY). Residues arginine 156 and arginine 167 each contribute to the AMP site. Lysine 200 serves as a coordination point for ATP.

It belongs to the adenylate kinase family. As to quaternary structure, monomer.

The protein localises to the cytoplasm. The catalysed reaction is AMP + ATP = 2 ADP. Its pathway is purine metabolism; AMP biosynthesis via salvage pathway; AMP from ADP: step 1/1. Functionally, catalyzes the reversible transfer of the terminal phosphate group between ATP and AMP. Plays an important role in cellular energy homeostasis and in adenine nucleotide metabolism. The polypeptide is Adenylate kinase (Vibrio atlanticus (strain LGP32) (Vibrio splendidus (strain Mel32))).